Consider the following 1310-residue polypeptide: Major viral transcription factor ICP4 homolog (1310 aa).

Disordered regions lie at residues 117–271 (AGAR…GPVE), 285–454 (GAKA…TPII), and 636–696 (GSSP…SLLD). A compositionally biased stretch (basic and acidic residues) spans 341–350 (PVEKKPKSRE). 3 stretches are compositionally biased toward low complexity: residues 351-364 (FVSS…WGSS), 392-407 (PSPS…DGGS), and 648-666 (PSPT…SAAA). A Nuclear localization signal motif is present at residues 677–685 (RLRTPRKRK). Phosphoserine; by VZV ORF66 is present on residues S686 and S722. Disordered stretches follow at residues 1195–1258 (RFVF…SFGV) and 1282–1310 (ELLS…QSRG). The segment covering 1217–1227 (RTADDREHALE) has biased composition (basic and acidic residues). Acidic residues predominate over residues 1228 to 1250 (PDDWEVGCEDAWDSEEGGGDDGD).

The protein belongs to the herpesviridae ICP4 family. In terms of assembly, interacts with IE4 and IE63. Interacts with human USF1 and SP1. In terms of processing, phosphorylated by ORF66 protein kinase on Ser-686 and Ser-722. Also phosphorylated by ORF47 protein kinase and by human CSNK2A1/CKII.

It is found in the host nucleus. It localises to the host cytoplasm. The protein localises to the virion tegument. Functionally, transcriptional transactivator. May interact with and recruit specific components of the general transcription machinery to viral promoters and stabilize their formation for transcription initiation. Negatively regulates its own transcription. This immediate early (EI) protein may be necessary in virion for viral pathogenesis. This chain is Major viral transcription factor ICP4 homolog, found in Homo sapiens (Human).